Reading from the N-terminus, the 100-residue chain is Urease subunit gamma (100 aa).

The protein belongs to the urease gamma subunit family. As to quaternary structure, heterotrimer of UreA (gamma), UreB (beta) and UreC (alpha) subunits. Three heterotrimers associate to form the active enzyme.

The protein resides in the cytoplasm. It carries out the reaction urea + 2 H2O + H(+) = hydrogencarbonate + 2 NH4(+). The protein operates within nitrogen metabolism; urea degradation; CO(2) and NH(3) from urea (urease route): step 1/1. This chain is Urease subunit gamma, found in Prochlorococcus marinus (strain MIT 9313).